We begin with the raw amino-acid sequence, 194 residues long: MALRELKVCLLGDTGVGKSSIVWRFVEDSFDPNINPTIGASFMTKTVQYQNELHKFLIWDTAGQEAFRALAPMYYRGSAAAIIVYDITKEETFSTLKNWVKELRQHGPPNIVVAIAGNKCDLIDVREVMERDAKDYADSIHAIFVETSAKNAININELFIEISRRIPSADANPPSGGKGFKLRRQPSEPQRSCC.

12-20 (GDTGVGKSS) lines the GTP pocket. Positions 34 to 42 (INPTIGASF) match the Effector region motif. Residues 60–64 (DTAGQ), 118–121 (NKCD), and 148–150 (SAK) each bind GTP. Positions 170–194 (DANPPSGGKGFKLRRQPSEPQRSCC) are disordered. S-geranylgeranyl cysteine attachment occurs at residues Cys193 and Cys194.

This sequence belongs to the small GTPase superfamily. Rab family. Interacts directly with ZFYVE20. Interacts (in its GTP-bound form) with RINL and RABGEF1. Binds EEA1.

It localises to the endosome membrane. Its subcellular location is the cell membrane. The protein localises to the early endosome. It is found in the late endosome. The protein resides in the cell projection. It localises to the ruffle. Its subcellular location is the cytoplasmic vesicle. The protein localises to the phagosome. It is found in the phagosome membrane. Its function is as follows. Plays a role in endocytosis and intracellular protein transport. Mediates trafficking of TF from early endosomes to recycling endosomes. Required for NGF-mediated endocytosis of NTRK1, and subsequent neurite outgrowth. Binds GTP and GDP and has low GTPase activity. Alternates between a GTP-bound active form and a GDP-bound inactive form. The chain is Ras-related protein Rab-22A (RAB22A) from Canis lupus familiaris (Dog).